The primary structure comprises 1486 residues: Chromosome partition protein MukB (1486 aa).

34–41 provides a ligand contact to ATP; that stretch reads GGNGAGKS. 3 coiled-coil regions span residues 326–418, 444–480, and 509–603; these read LEAD…QYNQ, LETF…QAYQ, and RHLA…RAPV. The interval 666–783 is flexible hinge; that stretch reads PGGSEDQRLN…EVPLFGRAAR (118 aa). Coiled coils occupy residues 835–923, 977–1115, and 1209–1266; these read EAEI…AKLE, EMLS…TAKA, and VEAI…QNVS.

The protein belongs to the SMC family. MukB subfamily. Homodimerization via its hinge domain. Binds to DNA via its C-terminal region. Interacts, and probably forms a ternary complex, with MukE and MukF via its C-terminal region. The complex formation is stimulated by calcium or magnesium. Interacts with tubulin-related protein FtsZ.

The protein localises to the cytoplasm. It is found in the nucleoid. In terms of biological role, plays a central role in chromosome condensation, segregation and cell cycle progression. Functions as a homodimer, which is essential for chromosome partition. Involved in negative DNA supercoiling in vivo, and by this means organize and compact chromosomes. May achieve or facilitate chromosome segregation by condensation DNA from both sides of a centrally located replisome during cell division. The protein is Chromosome partition protein MukB of Shigella flexneri serotype 5b (strain 8401).